The chain runs to 128 residues: Large ribosomal subunit protein bL20c (128 aa).

Belongs to the bacterial ribosomal protein bL20 family.

The protein localises to the plastid. It localises to the chloroplast. Binds directly to 23S ribosomal RNA and is necessary for the in vitro assembly process of the 50S ribosomal subunit. It is not involved in the protein synthesizing functions of that subunit. In Gossypium barbadense (Sea Island cotton), this protein is Large ribosomal subunit protein bL20c.